We begin with the raw amino-acid sequence, 1383 residues long: WD repeat-containing protein dyf-2 (1383 aa).

5 WD repeats span residues 32 to 71, 72 to 112, 118 to 157, 160 to 198, and 337 to 376; these read EHGS…IDAL, NPTG…TDTV, SSKE…RIAV, KHQR…VSTT, and ETEK…LAAS. TPR repeat units follow at residues 756–789, 810–847, 885–918, 940–973, 996–1029, 1031–1053, and 1064–1097; these read EEKN…MEAL, PKEI…NPQN, RVVK…DRAA, PKIH…DNQV, IEGA…QEAF, LAEK…NISQ, and VNDM…ENCV.

In terms of assembly, component of the IFT complex A (IFT-A) composed of at least che-11, daf-10, dyf-2, ift-139, ift-43 and ifta-1. As to expression, expressed in ciliated sensory neurons.

The protein resides in the cell projection. It localises to the cilium. Component of the IFT complex A (IFT-A), a complex required for retrograde ciliary transport. Moves along the ciliary axoneme and is involved in the assembly, localization and the movement of other intraflagellar transport (IFT) proteins along the cilia axoneme. May also associate with the BBSome complex in order to mediate ciliary transport. Regulates cilia biogenesis, morphology and sensitivity to environmental cues. This chain is WD repeat-containing protein dyf-2, found in Caenorhabditis elegans.